The primary structure comprises 193 residues: MAKLYFYYSTMNAGKSTTLLQSSYNYRERDMSTLVYTAAIDDRFGVGKVTSRIGISQDAFLFRSETNLFDEINEHLKKEKVHCVLVDEAQFLSKQQVYQLSDVVDKLKIPVLCYGLRTDFQAELFEGSKYLLAWADQLEELKTICYCGRKANFVLRLNDQGEVIKEGAQIQIGGNDSYLSVCRLHYKEKCGQI.

Residues 9–16 (STMNAGKS) and 87–90 (DEAQ) contribute to the ATP site. Glu-88 functions as the Proton acceptor in the catalytic mechanism. The Zn(2+) site is built by Cys-145, Cys-147, Cys-182, and His-185.

It belongs to the thymidine kinase family. In terms of assembly, homotetramer.

It is found in the cytoplasm. The catalysed reaction is thymidine + ATP = dTMP + ADP + H(+). In Haemophilus influenzae (strain 86-028NP), this protein is Thymidine kinase.